We begin with the raw amino-acid sequence, 530 residues long: Phosphoenolpyruvate carboxykinase (ATP) (530 aa).

Residues Arg-56, Tyr-196, and Lys-202 each contribute to the substrate site. Residues Lys-202, His-221, and 237–245 (GLSGTGKTT) each bind ATP. Mn(2+)-binding residues include Lys-202 and His-221. Asp-258 is a Mn(2+) binding site. ATP contacts are provided by residues Glu-286, Arg-322, 438-439 (RI), and Thr-444. Arg-322 contributes to the substrate binding site.

The protein belongs to the phosphoenolpyruvate carboxykinase (ATP) family. Monomer. Mn(2+) is required as a cofactor.

The protein resides in the cytoplasm. It carries out the reaction oxaloacetate + ATP = phosphoenolpyruvate + ADP + CO2. It functions in the pathway carbohydrate biosynthesis; gluconeogenesis. Involved in the gluconeogenesis. Catalyzes the conversion of oxaloacetate (OAA) to phosphoenolpyruvate (PEP) through direct phosphoryl transfer between the nucleoside triphosphate and OAA. The chain is Phosphoenolpyruvate carboxykinase (ATP) from Photobacterium profundum (strain SS9).